Reading from the N-terminus, the 92-residue chain is Small ribosomal subunit protein uS19 (92 aa).

It belongs to the universal ribosomal protein uS19 family.

Its function is as follows. Protein S19 forms a complex with S13 that binds strongly to the 16S ribosomal RNA. This Caulobacter vibrioides (strain ATCC 19089 / CIP 103742 / CB 15) (Caulobacter crescentus) protein is Small ribosomal subunit protein uS19.